The following is a 206-amino-acid chain: Small ribosomal subunit protein uS4 (206 aa).

The 62-residue stretch at 96–157 (QRLDNVVYRM…KAKKQARIGA (62 aa)) folds into the S4 RNA-binding domain.

It belongs to the universal ribosomal protein uS4 family. In terms of assembly, part of the 30S ribosomal subunit. Contacts protein S5. The interaction surface between S4 and S5 is involved in control of translational fidelity.

Its function is as follows. One of the primary rRNA binding proteins, it binds directly to 16S rRNA where it nucleates assembly of the body of the 30S subunit. Functionally, with S5 and S12 plays an important role in translational accuracy. The protein is Small ribosomal subunit protein uS4 of Idiomarina loihiensis (strain ATCC BAA-735 / DSM 15497 / L2-TR).